The primary structure comprises 320 residues: Cytochrome f (320 aa).

Positions 1-35 (MQTRNTFSWIREEITRSISVLLMIYIITWASISSA) are cleaved as a signal peptide. Heme is bound by residues tyrosine 36, cysteine 56, cysteine 59, and histidine 60. A helical membrane pass occupies residues 286–306 (VQGLLFFLGSVVLAQIFLVLK).

Belongs to the cytochrome f family. In terms of assembly, the 4 large subunits of the cytochrome b6-f complex are cytochrome b6, subunit IV (17 kDa polypeptide, petD), cytochrome f and the Rieske protein, while the 4 small subunits are PetG, PetL, PetM and PetN. The complex functions as a dimer. Heme serves as cofactor.

Its subcellular location is the plastid. It localises to the chloroplast thylakoid membrane. Functionally, component of the cytochrome b6-f complex, which mediates electron transfer between photosystem II (PSII) and photosystem I (PSI), cyclic electron flow around PSI, and state transitions. The chain is Cytochrome f from Lobularia maritima (Sweet alyssum).